The chain runs to 178 residues: E1B protein, small T-antigen (178 aa).

It belongs to the adenoviridae E1B 19 kDa protein family.

The protein resides in the host cell membrane. The protein localises to the host nucleus envelope. Its subcellular location is the host nucleus lamina. In terms of biological role, putative adenovirus Bcl-2 homolog that inhibits apoptosis induced by TNF or FAS pathways, as well as p53-mediated apoptosis. Without E1B 19K function, virus production is compromised because of premature death of host cell. Interacts with Bax protein in cell lysates. In Human adenovirus B serotype 7 (HAdV-7), this protein is E1B protein, small T-antigen.